The chain runs to 106 residues: Iron-sulfur cluster assembly protein CyaY (106 aa).

It belongs to the frataxin family.

In terms of biological role, involved in iron-sulfur (Fe-S) cluster assembly. May act as a regulator of Fe-S biogenesis. This is Iron-sulfur cluster assembly protein CyaY from Salmonella dublin (strain CT_02021853).